Here is a 351-residue protein sequence, read N- to C-terminus: Phosphate acyltransferase (351 aa).

The protein belongs to the PlsX family. As to quaternary structure, homodimer. Probably interacts with PlsY.

Its subcellular location is the cytoplasm. The enzyme catalyses a fatty acyl-[ACP] + phosphate = an acyl phosphate + holo-[ACP]. The protein operates within lipid metabolism; phospholipid metabolism. In terms of biological role, catalyzes the reversible formation of acyl-phosphate (acyl-PO(4)) from acyl-[acyl-carrier-protein] (acyl-ACP). This enzyme utilizes acyl-ACP as fatty acyl donor, but not acyl-CoA. The polypeptide is Phosphate acyltransferase (Neisseria meningitidis serogroup C / serotype 2a (strain ATCC 700532 / DSM 15464 / FAM18)).